A 686-amino-acid chain; its full sequence is Eukaryotic translation initiation factor 3 subunit B (686 aa).

Positions 1–29 (MAKKHAGADANDSDYNEEPNFEDPPGFVD) are disordered. Acidic residues predominate over residues 11 to 21 (NDSDYNEEPNF). An RRM domain is found at 53-137 (SVVVVDNIPK…HTFAVNLFTD (85 aa)). WD repeat units follow at residues 203–242 (TRER…KIQK), 289–327 (DGMS…LLDL), 330–365 (IKIP…TLME), 438–480 (EIRE…KPSL), and 526–571 (PDHF…IKRT). The stretch at 590–642 (AEEKQKEIKKNLKKYYAVFEQKDRLRLTRASKELLEKRAQLRETFMEYRNKRI) forms a coiled coil.

The protein belongs to the eIF-3 subunit B family. Component of the eukaryotic translation initiation factor 3 (eIF-3) complex. The eIF-3 complex interacts with pix. Interacts with mxt.

The protein localises to the cytoplasm. Functionally, RNA-binding component of the eukaryotic translation initiation factor 3 (eIF-3) complex, which is involved in protein synthesis of a specialized repertoire of mRNAs and, together with other initiation factors, stimulates binding of mRNA and methionyl-tRNAi to the 40S ribosome. The eIF-3 complex specifically targets and initiates translation of a subset of mRNAs involved in cell proliferation. The polypeptide is Eukaryotic translation initiation factor 3 subunit B (Drosophila ananassae (Fruit fly)).